Consider the following 448-residue polypeptide: Carbon catabolite repressor protein 4 homolog 3 (448 aa).

A compositionally biased stretch (low complexity) spans 50 to 67 (SSTSGPSDSNPESSSNRS). The disordered stretch occupies residues 50-92 (SSTSGPSDSNPESSSNRSYSRRWQNPLPRRQHPDQIPSSQIAR). Position 162 (glutamate 162) interacts with Mg(2+).

The protein belongs to the CCR4/nocturin family. In terms of assembly, component of the CCR4-NOT complex, at least composed of CRR4 and CAF1 proteins. Mg(2+) serves as cofactor.

It is found in the nucleus. It localises to the cytoplasm. It carries out the reaction Exonucleolytic cleavage of poly(A) to 5'-AMP.. Acts as a catalytic component of the CCR4-NOT core complex, which in the nucleus seems to be a general transcription factor, and in the cytoplasm the major mRNA deadenylase involved in mRNA turnover. This is Carbon catabolite repressor protein 4 homolog 3 (CCR4-3) from Arabidopsis thaliana (Mouse-ear cress).